The chain runs to 170 residues: Small capsomere-interacting protein (170 aa).

The span at 76-88 (TLRDQKPRERADR) shows a compositional bias: basic and acidic residues. Positions 76-170 (TLRDQKPRER…ARKPPSGKKK (95 aa)) are disordered. Positions 110-139 (SGTTPGGQDSLGVSGSSITTLSSGPHSLSP) are enriched in polar residues. Residues 144–155 (LTTLSSTTETAA) show a composition bias toward low complexity.

This sequence belongs to the herpesviridae small capsomere-interacting protein family. Interacts with the major capsid protein/MCP.

The protein resides in the virion. The protein localises to the host nucleus. In terms of biological role, participates in the assembly of the infectious particles by decorating the outer surface of the capsid shell and thus forming a layer between the capsid and the tegument. Complexes composed of the major capsid protein and small capsomere-interacting protein/SCP assemble together in the host cytoplasm and are translocated to the nucleus, where they accumulate and participate in capsid assembly. This chain is Small capsomere-interacting protein, found in Homo sapiens (Human).